An 85-amino-acid polypeptide reads, in one-letter code: Small ribosomal subunit protein bS16c (85 aa).

This sequence belongs to the bacterial ribosomal protein bS16 family.

Its subcellular location is the plastid. The protein localises to the chloroplast. The chain is Small ribosomal subunit protein bS16c from Oryza nivara (Indian wild rice).